Here is a 245-residue protein sequence, read N- to C-terminus: Adenosylcobinamide-GDP ribazoletransferase (245 aa).

The next 5 helical transmembrane spans lie at 31–51 (FGRAVLCYPLVGVLIGVVLYA), 61–81 (PLLQAALLLSLWVALSGALHL), 113–133 (VAVVVLVLVLLLKFSALAALL), 138–158 (AGLLPLAPWLARSSLPLLFLT), and 192–212 (LAFGLAGLLALLVTLMLFAWL).

It belongs to the CobS family. The cofactor is Mg(2+).

Its subcellular location is the cell inner membrane. The enzyme catalyses alpha-ribazole + adenosylcob(III)inamide-GDP = adenosylcob(III)alamin + GMP + H(+). The catalysed reaction is alpha-ribazole 5'-phosphate + adenosylcob(III)inamide-GDP = adenosylcob(III)alamin 5'-phosphate + GMP + H(+). The protein operates within cofactor biosynthesis; adenosylcobalamin biosynthesis; adenosylcobalamin from cob(II)yrinate a,c-diamide: step 7/7. In terms of biological role, joins adenosylcobinamide-GDP and alpha-ribazole to generate adenosylcobalamin (Ado-cobalamin). Also synthesizes adenosylcobalamin 5'-phosphate from adenosylcobinamide-GDP and alpha-ribazole 5'-phosphate. This is Adenosylcobinamide-GDP ribazoletransferase from Pseudomonas aeruginosa (strain UCBPP-PA14).